The chain runs to 124 residues: Small ribosomal subunit protein bS16 (124 aa).

Over residues 84-110 the composition is skewed to basic and acidic residues; the sequence is EKAERKNLKKGEPGKAAKERAEKRAAR. Residues 84-124 are disordered; that stretch reads EKAERKNLKKGEPGKAAKERAEKRAAREAAANAPAEEAASE. The span at 111 to 124 shows a compositional bias: low complexity; sequence EAAANAPAEEAASE.

This sequence belongs to the bacterial ribosomal protein bS16 family.

This chain is Small ribosomal subunit protein bS16, found in Paracoccus denitrificans (strain Pd 1222).